A 761-amino-acid chain; its full sequence is Phosphoribosylformylglycinamidine synthase subunit PurL (761 aa).

His-49 is a catalytic residue. Tyr-52 and Lys-92 together coordinate ATP. Glu-94 lines the Mg(2+) pocket. Substrate is bound by residues 95 to 98 and Arg-117; that span reads SHNH. His-96 acts as the Proton acceptor in catalysis. Residue Asp-118 coordinates Mg(2+). Gln-241 contacts substrate. Residue Asp-269 coordinates Mg(2+). A substrate-binding site is contributed by 318–320; the sequence is ESQ. 2 residues coordinate ATP: Asn-502 and Gly-539. A Mg(2+)-binding site is contributed by Asn-540. Substrate is bound at residue Ser-542.

This sequence belongs to the FGAMS family. Monomer. Part of the FGAM synthase complex composed of 1 PurL, 1 PurQ and 2 PurS subunits.

The protein resides in the cytoplasm. It carries out the reaction N(2)-formyl-N(1)-(5-phospho-beta-D-ribosyl)glycinamide + L-glutamine + ATP + H2O = 2-formamido-N(1)-(5-O-phospho-beta-D-ribosyl)acetamidine + L-glutamate + ADP + phosphate + H(+). It participates in purine metabolism; IMP biosynthesis via de novo pathway; 5-amino-1-(5-phospho-D-ribosyl)imidazole from N(2)-formyl-N(1)-(5-phospho-D-ribosyl)glycinamide: step 1/2. Functionally, part of the phosphoribosylformylglycinamidine synthase complex involved in the purines biosynthetic pathway. Catalyzes the ATP-dependent conversion of formylglycinamide ribonucleotide (FGAR) and glutamine to yield formylglycinamidine ribonucleotide (FGAM) and glutamate. The FGAM synthase complex is composed of three subunits. PurQ produces an ammonia molecule by converting glutamine to glutamate. PurL transfers the ammonia molecule to FGAR to form FGAM in an ATP-dependent manner. PurS interacts with PurQ and PurL and is thought to assist in the transfer of the ammonia molecule from PurQ to PurL. The sequence is that of Phosphoribosylformylglycinamidine synthase subunit PurL from Chlorobium luteolum (strain DSM 273 / BCRC 81028 / 2530) (Pelodictyon luteolum).